The sequence spans 184 residues: MITAVRAVPFRVGIGYDVHGFADSPPENGHIVLCGVEIAFHRKIKAHSDGDVGTHALVDALLGCVGEGSIGEHFPNTDPRWENMSSTHFLLEAQSKALAKGYAVLNFDLTIVCELPKIIPHVPKMKLFMSKLLGMDASAINIKAVTTEKLGFIGRGEGIAAHAVVLCRKVTAAAPNPGSENPRG.

Residues Asp17 and His19 each contribute to the a divalent metal cation site. 4-CDP-2-C-methyl-D-erythritol 2-phosphate is bound by residues Asp17 to His19 and His47 to Ser48. His55 is a binding site for a divalent metal cation. Residues Phe74–Asp78, Phe152, and Arg155 each bind 4-CDP-2-C-methyl-D-erythritol 2-phosphate.

It belongs to the IspF family. Homotrimer. Requires a divalent metal cation as cofactor.

It catalyses the reaction 4-CDP-2-C-methyl-D-erythritol 2-phosphate = 2-C-methyl-D-erythritol 2,4-cyclic diphosphate + CMP. It functions in the pathway isoprenoid biosynthesis; isopentenyl diphosphate biosynthesis via DXP pathway; isopentenyl diphosphate from 1-deoxy-D-xylulose 5-phosphate: step 4/6. Functionally, involved in the biosynthesis of isopentenyl diphosphate (IPP) and dimethylallyl diphosphate (DMAPP), two major building blocks of isoprenoid compounds. Catalyzes the conversion of 4-diphosphocytidyl-2-C-methyl-D-erythritol 2-phosphate (CDP-ME2P) to 2-C-methyl-D-erythritol 2,4-cyclodiphosphate (ME-CPP) with a corresponding release of cytidine 5-monophosphate (CMP). In Anaplasma marginale (strain St. Maries), this protein is 2-C-methyl-D-erythritol 2,4-cyclodiphosphate synthase.